Consider the following 53-residue polypeptide: Conotoxin Cal6.23 (53 aa).

An N-terminal signal peptide occupies residues 1–22 (MKLTAVLMVAVLVLTACQLITA). 3 disulfides stabilise this stretch: cysteine 25–cysteine 40, cysteine 32–cysteine 47, and cysteine 39–cysteine 51.

The protein belongs to the conotoxin O1 superfamily. Expressed by the venom duct.

The protein localises to the secreted. Functionally, probable neurotoxin. This is Conotoxin Cal6.23 from Californiconus californicus (California cone).